Consider the following 222-residue polypeptide: RING finger protein 141 (222 aa).

An RING-type zinc finger spans residues 147–184 (CCICMDGKADLILPCAHSFCQKCIDKWSGQSRNCPVCR).

This chain is RING finger protein 141 (rnf141), found in Danio rerio (Zebrafish).